Here is a 527-residue protein sequence, read N- to C-terminus: Catalase (527 aa).

Positions 1 to 22 (MADSRDPASDQMKHWKEERAAQ) are enriched in basic and acidic residues. The segment at 1-32 (MADSRDPASDQMKHWKEERAAQKPDVLTTAGG) is disordered. N-acetylalanine is present on alanine 2. Serine 9 is subject to Phosphoserine. Lysine 13 is modified (N6-succinyllysine). Residues histidine 75 and asparagine 148 contribute to the active site. NADP(+) contacts are provided by histidine 194, serine 201, arginine 203, and asparagine 213. Lysine 221 bears the N6-succinyllysine mark. An N6-acetyllysine modification is found at lysine 233. The NADP(+) site is built by lysine 237, tryptophan 303, histidine 305, and lysine 306. Lysine 306 bears the N6-acetyllysine; alternate mark. Lysine 306 bears the N6-succinyllysine; alternate mark. Tyrosine 358 contributes to the heme binding site. A Phosphoserine modification is found at serine 434. Lysine 480 carries the post-translational modification N6-acetyllysine; alternate. At lysine 480 the chain carries N6-succinyllysine; alternate. Lysine 499 is subject to N6-acetyllysine. The residue at position 511 (threonine 511) is a Phosphothreonine. Serine 517 carries the post-translational modification Phosphoserine. Lysine 522 carries the N6-succinyllysine modification. Positions 524–527 (KANL) match the Microbody targeting signal; atypical motif.

This sequence belongs to the catalase family. Homotetramer. Interacts (via microbody targeting signal) with PEX5, monomeric form interacts with PEX5, leading to its translocation into peroxisomes. The cofactor is heme. It depends on NADP(+) as a cofactor.

The protein localises to the peroxisome matrix. The catalysed reaction is 2 H2O2 = O2 + 2 H2O. Its function is as follows. Catalyzes the degradation of hydrogen peroxide (H(2)O(2)) generated by peroxisomal oxidases to water and oxygen, thereby protecting cells from the toxic effects of hydrogen peroxide. Promotes growth of cells including T-cells, B-cells, myeloid leukemia cells, melanoma cells, mastocytoma cells and normal and transformed fibroblast cells. This is Catalase (CAT) from Cavia porcellus (Guinea pig).